The following is a 443-amino-acid chain: Aspartic protease PEP3 (443 aa).

A signal peptide spans 1-36 (MQNRPRVFDSAMNLSPNMHFLSLMPGLLLLSLQVHT). Positions 37–107 (SPTPLKKTIR…NTVSKAMQAN (71 aa)) are cleaved as a propeptide — activation peptide. The Peptidase A1 domain occupies 123–440 (YLSPVTIGGQ…DLRGPSLHVA (318 aa)). The active site involves Asp139. N-linked (GlcNAc...) asparagine glycosylation is found at Asn180 and Asn293. Asp327 is an active-site residue. Residues Cys363 and Cys403 are joined by a disulfide bond. N-linked (GlcNAc...) asparagine glycosylation is found at Asn364 and Asn388.

It belongs to the peptidase A1 family. In terms of assembly, monomer.

The protein localises to the secreted. Its function is as follows. Secreted aspartic endopeptidase that allows assimilation of proteinaceous substrates. The scissile peptide bond is attacked by a nucleophilic water molecule activated by two aspartic residues in the active site. Shows a broad primary substrate specificity. Favors hydrophobic residues at the P1 and P1' positions. The protein is Aspartic protease PEP3 of Coccidioides posadasii (strain C735) (Valley fever fungus).